Here is a 397-residue protein sequence, read N- to C-terminus: Sporulation-specific protein 20 (397 aa).

The interval 1–26 (MGFRKILASKSHHSRHHNQHHKNLKL) is disordered. The segment at 4 to 50 (RKILASKSHHSRHHNQHHKNLKLQNHRYVLISNITGSHETKYLSPFR) is inhibitory region. Positions 10 to 26 (KSHHSRHHNQHHKNLKL) are enriched in basic residues. The segment at 51 to 95 (MDNCSGSRRRDRLHVKLKSLRNKIHKQLHPNCRFDDATKTSDDKC) is positive regulatory region. The t-SNARE coiled-coil homology domain maps to 330-392 (NQMEIDLYGN…QAKRYRLEKV (63 aa)).

It belongs to the SNAP-25 family. Interacts with the t-SNARE SSO1 and the v-SNARE SNC2.

It is found in the cell membrane. The protein localises to the prospore membrane. Functionally, required to maintain the prospore membrane to the nucleus during sporulation in order to capture the daughter nuclei and form the spores. Mediates the fusion of exocytic vesicles with the plasma membrane during sporulation through its interactions with the t-SNARE SSO1 and v-SNARE SNC2. This Saccharomyces cerevisiae (strain ATCC 204508 / S288c) (Baker's yeast) protein is Sporulation-specific protein 20 (SPO20).